Consider the following 453-residue polypeptide: C4-dicarboxylate TRAP transporter large permease protein DctM (453 aa).

Transmembrane regions (helical) follow at residues 2-22, 50-70, 82-102, 104-124, 139-159, 172-192, 217-237, 243-263, 289-309, 326-346, 356-376, 380-400, and 417-437; these read AVALLFILVIGMMIVGVPIAI, AFAGHYTLLAIPFFILASTFM, FAIAMVGWFRGGLAIASVVAC, MFAALSGSSPATVVAIGSIVI, GVICNAGTLGILIPPSIVMVV, FLGGVVPGLLAGLMLIIAIYI, ASWGLLLVVIILGGIYGGIFT, AVAAVYSFFIANFIYRDMGPF, LYDAGKLTIMLMFIIANALIL, MLSAGLGPITFLIVVNLILLV, LLVIVAPLVFPIAIALGIDPI, IMMVVNMEIGMITPPVGLNLF, and ALPWVGVMFLFLIIVTYVPWV.

This sequence belongs to the TRAP transporter large permease family. In terms of assembly, the complex comprises the extracytoplasmic solute receptor protein DctP, and the two transmembrane proteins DctQ and DctM.

It localises to the cell inner membrane. Its function is as follows. Part of the tripartite ATP-independent periplasmic (TRAP) transport system DctPQM involved in C4-dicarboxylates uptake. This is C4-dicarboxylate TRAP transporter large permease protein DctM from Vibrio cholerae serotype O1 (strain ATCC 39315 / El Tor Inaba N16961).